The primary structure comprises 207 residues: Guanylate kinase (207 aa).

One can recognise a Guanylate kinase-like domain in the interval 4–184 (GTLYIVSAPS…ALSDLKTIIR (181 aa)). An ATP-binding site is contributed by 11-18 (APSGAGKS).

This sequence belongs to the guanylate kinase family.

The protein localises to the cytoplasm. It carries out the reaction GMP + ATP = GDP + ADP. Functionally, essential for recycling GMP and indirectly, cGMP. This Yersinia pestis bv. Antiqua (strain Antiqua) protein is Guanylate kinase.